The sequence spans 290 residues: Porphobilinogen deaminase (290 aa).

Cysteine 238 carries the S-(dipyrrolylmethanemethyl)cysteine modification.

This sequence belongs to the HMBS family. As to quaternary structure, monomer. The cofactor is dipyrromethane.

It catalyses the reaction 4 porphobilinogen + H2O = hydroxymethylbilane + 4 NH4(+). It functions in the pathway porphyrin-containing compound metabolism; protoporphyrin-IX biosynthesis; coproporphyrinogen-III from 5-aminolevulinate: step 2/4. In terms of biological role, tetrapolymerization of the monopyrrole PBG into the hydroxymethylbilane pre-uroporphyrinogen in several discrete steps. This Clostridium botulinum (strain Eklund 17B / Type B) protein is Porphobilinogen deaminase.